The following is a 278-amino-acid chain: Betaine--homocysteine S-methyltransferase 1 (278 aa).

A Hcy-binding domain is found at 11 to 278 (KGILERLNSG…FGLEPRVATR (268 aa)). N6-succinyllysine is present on residues lysine 40, lysine 93, and lysine 98. Residue cysteine 217 participates in Zn(2+) binding. Residues lysine 232 and lysine 241 each carry the N6-succinyllysine modification.

As to quaternary structure, homotetramer. Zn(2+) serves as cofactor. As to expression, found exclusively in liver and kidney.

It is found in the cytoplasm. Its subcellular location is the cytosol. The protein localises to the nucleus. It carries out the reaction L-homocysteine + glycine betaine = N,N-dimethylglycine + L-methionine. The protein operates within amine and polyamine degradation; betaine degradation; sarcosine from betaine: step 1/2. It functions in the pathway amino-acid biosynthesis; L-methionine biosynthesis via de novo pathway; L-methionine from L-homocysteine (BhmT route): step 1/1. Its activity is regulated as follows. Inhibited by dimethylglycine and methylthioacetate. Its function is as follows. Involved in the regulation of homocysteine metabolism. Converts betaine and homocysteine to dimethylglycine and methionine, respectively. This reaction is also required for the irreversible oxidation of choline. The chain is Betaine--homocysteine S-methyltransferase 1 from Sus scrofa (Pig).